The primary structure comprises 82 residues: uncharacterized protein (82 aa).

This sequence belongs to the chlamydial CPn_0710/CT_666/TC_0037 family.

This is an uncharacterized protein from Chlamydia muridarum (strain MoPn / Nigg).